The following is a 35-amino-acid chain: Mu/omega-theraphotoxin-Tap1a (35 aa).

Disulfide bonds link Cys-3–Cys-18, Cys-10–Cys-23, and Cys-17–Cys-30.

It belongs to the neurotoxin 10 (Hwtx-1) family. 59 (Tltx) subfamily. Expressed by the venom gland.

The protein localises to the secreted. In terms of biological role, gating-modifier toxin that inhibits both sodium (Nav) and calcium (Cav3) channels by inducing hyperpolarizing shift in voltage-dependence of activation and steady state inactivation. Inhibits Nav1.1/SCN1A, Nav1.2/SCN2A, Nav1.3/SCN3A, Nav1.6/SCN6A, Nav1.7/SCN9A and Cav3.1/CACNA1G sodium and calcium channels at nanomolar concentrations (IC(50)=81-301 nM). Surprisingly, selectively slows fast inactivation of Nav1.3/SCN3A. Also shows moderate inhibition of Cav3.2/CACNA1H calcium channels (IC(50)=1233 nM). Ex vivo, nearly ablates neuronal mechanosensitivity in afferent fibers innervating the colon and the bladder. In vivo, in a mouse model of irritable bowel syndrome, intracolonic administration of the toxin reverses colonic mechanical hypersensitivity. The polypeptide is Mu/omega-theraphotoxin-Tap1a (Theraphosa apophysis (Goliath pinkfoot tarantula)).